Reading from the N-terminus, the 309-residue chain is 1,4-dihydroxy-2-naphthoyl-CoA synthase (309 aa).

Substrate is bound by residues R53, 98–102, Y110, 152–156, T179, S185, Y282, and K297; these read SGGDQ and WAAGG.

This sequence belongs to the enoyl-CoA hydratase/isomerase family. MenB subfamily.

The catalysed reaction is 2-succinylbenzoyl-CoA + H(+) = 1,4-dihydroxy-2-naphthoyl-CoA + H2O. Its pathway is quinol/quinone metabolism; 1,4-dihydroxy-2-naphthoate biosynthesis; 1,4-dihydroxy-2-naphthoate from chorismate: step 6/7. The protein operates within quinol/quinone metabolism; menaquinone biosynthesis. Functionally, converts o-succinylbenzoyl-CoA (OSB-CoA) to 1,4-dihydroxy-2-naphthoyl-CoA (DHNA-CoA). The chain is 1,4-dihydroxy-2-naphthoyl-CoA synthase from Mycolicibacterium smegmatis (strain ATCC 700084 / mc(2)155) (Mycobacterium smegmatis).